Here is a 1065-residue protein sequence, read N- to C-terminus: NLR family CARD domain-containing protein 3 (1065 aa).

Residues 1 to 10 are compositionally biased toward basic and acidic residues; it reads MRKQEVRTGR. The tract at residues 1-62 is disordered; the sequence is MRKQEVRTGR…PLGPCSNDSR (62 aa). Residues 139–460 enclose the NACHT domain; sequence RVSITIGVAG…YCFTHLSLQE (322 aa). 145–152 contacts ATP; it reads GVAGMGKT. Residues 457 to 460 carry the TRAF6-binding motif; the sequence is SLQE. 16 LRR repeats span residues 617-639, 641-663, 665-688, 693-716, 721-744, 749-772, 777-800, 805-828, 833-856, 861-884, 889-912, 917-940, 945-968, 973-996, 1001-1029, and 1031-1052; these read EANLSLSLSQGVLQSLLPQLLYC, KLRLDTNQFQDPVMELLGSVLSG, DCRIQKISLAENQISNKGAKALAR, NRSLTSLDLRGNSIGPQGAKALAD, NRTLTSLSLQGNTVRDDGARSMAE, NRTLSMLHLQKNSIGPMGAQRMAD, NRSLKELMFSSNSIGDGGAKALAE, NQGLESLDLQSNSISDAGVAALMG, NQTLLSLSLRENSISPEGAQAIAH, NSTLKNLDLTANLLHDQGARAIAV, NRTLTSLHLQWNFIQAGAAQALGQ, NRSLTSLDLQENAIGDDGACAVAR, NTALTALYLQVASIGASGAQVLGE, NRTLEILDLRGNAIGVAGAKALAN, NSSLRRLNLQENSLGMDGAICIATALSGN, and RLQHINLQGNHIGDSGARMISE.

It belongs to the NLRP family. In terms of assembly, directly interacts (via CARD) with TMEM173/STING; this interaction reduces TMEM173 trafficking to the perinuclear region in response to interferon stimulatory DNA. Also interacts, but to a lesser extent, with TBK1. Interacts with TRAF6; this interaction results in decreased TRAF6 'Lys-63'-linked polyubiquitination, but leaves 'Lys-48'-linked chains unchanged, promoting TRAF6 protein degradation. Interacts with PIK3R1/PIK3R2; this interaction disrupts the association between PIK3R1/PIK3R2 and the p110 catalytic subunit PIK3CA/PIK3CB/PIK3CD and reduces PIK3R1/PIK3R2 activation. Weakly interacts with PYCARD/ASC. Interacts with CASP1 and CASP5.

Its subcellular location is the cytoplasm. Negative regulator of the innate immune response. Attenuates signaling pathways activated by Toll-like receptors (TLRs) and the DNA sensor STING/TMEM173 in response to pathogen-associated molecular patterns, such as intracellular poly(dA:dT), but not poly(I:C), or in response to DNA virus infection, including that of Herpes simplex virus 1 (HSV1). May affect TLR4 signaling by acting at the level of TRAF6 ubiquitination, decreasing the activating 'Lys-63'-linked ubiquitination and leaving unchanged the degradative 'Lys-48'-linked ubiquitination. Inhibits the PI3K-AKT-mTOR pathway possibly by directly interacting with the posphatidylinositol 3-kinase regulatory subunit p85 (PIK3R1/PIK3R2) and disrupting the association between PIK3R1/PIK3R2 and the catalytic subunit p110 (PIK3CA/PIK3CB/PIK3CD) and reducing PIK3R1/PIK3R2 activation. Via its regulation of the PI3K-AKT-mTOR pathway, controls cell proliferation, predominantly in intestinal epithelial cells. May also affect NOD1- or NOD2-mediated NF-kappa-B activation. Might also affect the inflammatory response by preventing NLRP3 inflammasome formation, CASP1 cleavage and IL1B maturation. The polypeptide is NLR family CARD domain-containing protein 3 (NLRC3) (Homo sapiens (Human)).